The primary structure comprises 431 residues: Teosinte glume architecture 1 (431 aa).

Disordered stretches follow at residues 18 to 55 and 68 to 102; these read QDHAAAAPSSGGHAANAAAAGTGTESRPPAPGAAGAPA and ECEPGAARREREAAAGAAKRPRPAGPGGQQQQQCP. Residues 21–41 are compositionally biased toward low complexity; the sequence is AAAAPSSGGHAANAAAAGTGT. Residues 101–178 form an SBP-type zinc finger; the sequence is CPSCAVDGCR…DGHNRRRRKP (78 aa). Zn(2+) contacts are provided by Cys104, Cys109, Cys126, His129, Cys145, Cys148, His152, and Cys164. Residues 408–419 are compositionally biased toward gly residues; sequence GGGSGGGEGSSD. Residues 408 to 431 form a disordered region; it reads GGGSGGGEGSSDGGTSSSMPFSWQ.

In terms of assembly, monomer and homodimer. Strongly expressed in immature ears and weakly in husks. Found in the inflorescence meristem of the developing ear, in the spikelet pair primordia, the glume primordia, the cupule forming region and other floral organs. Not detected in other tissues.

In terms of biological role, SBP transcriptional regulator probably involved in the domestication of maize. Acts as a transcriptional repressor binding to a 5'-GTAC-3' motif. May repress the growth of lateral branches in length and numbers. The protein is Teosinte glume architecture 1 of Zea mays (Maize).